We begin with the raw amino-acid sequence, 473 residues long: Allene oxide synthase CYP74A2 (473 aa).

Heme b-binding residues include Lys-88, His-119, and Lys-123. (13S)-hydroperoxy-(9Z,11E)-octadecadienoate-binding residues include Ser-199 and Lys-282. Lys-424 and Cys-426 together coordinate heme b.

Belongs to the cytochrome P450 family. Heme b serves as cofactor.

It carries out the reaction (13S)-hydroperoxy-(9Z,11E,15Z)-octadecatrienoate = (9Z,13S,15Z)-12,13-epoxyoctadeca-9,11,15-trienoate + H2O. It catalyses the reaction (13S)-hydroperoxy-(9Z,11E)-octadecadienoate = (9Z,13S)-12,13-epoxyoctadeca-9,11-dienoate + H2O. The protein operates within lipid metabolism; oxylipin biosynthesis. Cytochrome P450 enzyme involved in the biosynthesis of oxylipin jasmonates, important phytohormones acting as growth regulators and signaling molecules for plant defense. Functions as an allene oxide synthase that converts hydroperoxy fatty acids to unstable allene epoxides. Catalyzes the dehydration of 13-HPOTE ((13S)-hydroperoxy-(9Z,11E,15Z)-octadecatrienoate). Also catalyzes the dehydration of 13-HPODE ((13S)-hydroperoxy-(9Z,11E)-octadecadienoate). The protein is Allene oxide synthase CYP74A2 of Parthenium argentatum (Guayule rubber plant).